The primary structure comprises 306 residues: Formimidoylglutamase (306 aa).

Polar residues predominate over residues 1–13 (MFQNATDWTPTST). The interval 1 to 36 (MFQNATDWTPTSTDPRDEQFGGVVEPVPTPSDADDY) is disordered. Mn(2+) contacts are provided by N123, D147, H149, D151, D234, and D236.

It belongs to the arginase family. Mn(2+) is required as a cofactor.

The catalysed reaction is N-formimidoyl-L-glutamate + H2O = formamide + L-glutamate. Its pathway is amino-acid degradation; L-histidine degradation into L-glutamate; L-glutamate from N-formimidoyl-L-glutamate (hydrolase route): step 1/1. Functionally, catalyzes the conversion of N-formimidoyl-L-glutamate to L-glutamate and formamide. The chain is Formimidoylglutamase from Halobacterium salinarum (strain ATCC 29341 / DSM 671 / R1).